Reading from the N-terminus, the 565-residue chain is Glycine--tRNA ligase (565 aa).

Arg-98 and Glu-164 together coordinate substrate. Residues 196–198 (RNE), 206–211 (IRLREF), 323–324 (EI), and 440–443 (GIDR) contribute to the ATP site. Residue 211–215 (FTQAE) coordinates substrate. 436–440 (EPSFG) contacts substrate.

The protein belongs to the class-II aminoacyl-tRNA synthetase family.

It is found in the cytoplasm. The catalysed reaction is tRNA(Gly) + glycine + ATP = glycyl-tRNA(Gly) + AMP + diphosphate. Functionally, catalyzes the attachment of glycine to tRNA(Gly). The protein is Glycine--tRNA ligase of Methanothermobacter thermautotrophicus (strain ATCC 29096 / DSM 1053 / JCM 10044 / NBRC 100330 / Delta H) (Methanobacterium thermoautotrophicum).